A 109-amino-acid polypeptide reads, in one-letter code: MNIQALMQQAQTMQKKVEANVENAKKDLANKEVHAEAGSGLVKVTMTGRHVVKRLTIDPSLLEDEPDMIEDLIAAAINDAVRQADELYETTMAGATSGMGLPPGMQGMF.

Belongs to the YbaB/EbfC family. In terms of assembly, homodimer.

It localises to the cytoplasm. Its subcellular location is the nucleoid. Its function is as follows. Binds to DNA and alters its conformation. May be involved in regulation of gene expression, nucleoid organization and DNA protection. The polypeptide is Nucleoid-associated protein Psyc_0793 (Psychrobacter arcticus (strain DSM 17307 / VKM B-2377 / 273-4)).